A 441-amino-acid chain; its full sequence is Dihydroorotase (441 aa).

Zn(2+)-binding residues include histidine 77 and histidine 79. Residues histidine 79–arginine 81 and asparagine 111 each bind substrate. Positions 167, 194, and 248 each coordinate Zn(2+). Substrate is bound at residue asparagine 294. Aspartate 321 is a binding site for Zn(2+). The active site involves aspartate 321. Substrate contacts are provided by residues histidine 325 and phenylalanine 339–glycine 340.

The protein belongs to the metallo-dependent hydrolases superfamily. DHOase family. Class I DHOase subfamily. The cofactor is Zn(2+).

The enzyme catalyses (S)-dihydroorotate + H2O = N-carbamoyl-L-aspartate + H(+). Its pathway is pyrimidine metabolism; UMP biosynthesis via de novo pathway; (S)-dihydroorotate from bicarbonate: step 3/3. In terms of biological role, catalyzes the reversible cyclization of carbamoyl aspartate to dihydroorotate. This chain is Dihydroorotase, found in Wolbachia sp. subsp. Drosophila simulans (strain wRi).